We begin with the raw amino-acid sequence, 723 residues long: Transmembrane channel-like protein 7 (723 aa).

The segment at 1–21 (MSESSASALQLGRPSRQPAVH) is disordered. Residues 1 to 168 (MSESSASALQ…GIQSYFSFLR (168 aa)) lie on the Extracellular side of the membrane. Asparagine 24 carries an N-linked (GlcNAc...) asparagine glycan. Residues 51 to 70 (RRRTTVHSRDKQSGTLLKST) form a disordered region. Asparagine 84 carries an N-linked (GlcNAc...) asparagine glycan. The residue at position 89 (serine 89) is a Phosphoserine. N-linked (GlcNAc...) asparagine glycosylation occurs at asparagine 96. The helical transmembrane segment at 169–189 (FLVLLNLVIFLIIFMLVLLPI) threads the bilayer. Residues 190–219 (LLTKYKITNSSFVLIPFKDTDIQCTVYPVS) lie on the Cytoplasmic side of the membrane. A helical membrane pass occupies residues 220–240 (SSGLIYFYSYIIDLLSGTGFL). Topologically, residues 241 to 263 (EETSLFYGHYTIDGVKFQNFTYD) are extracellular. N-linked (GlcNAc...) asparagine glycosylation occurs at asparagine 259. Residues 264-284 (LPLAYLISTIAYLALSLLWIV) form a helical membrane-spanning segment. Topologically, residues 285-362 (KRSVEGFKIN…EETIRIYSLR (78 aa)) are cytoplasmic. Residues 363 to 383 (LFLNCIVLAVLGACFYAIYVA) traverse the membrane as a helical segment. Residues 384-404 (TVFSQEHMKKEIDKMVFGENL) lie on the Extracellular side of the membrane. The helical transmembrane segment at 405–425 (LILYLPSIVITLANFITPMIF) threads the bilayer. Residues 426–494 (AKIIRYEDYS…PCWETQVGQE (69 aa)) are Cytoplasmic-facing. Residues 495-515 (MYKLMIFDFIIILAVTLFVDF) form a helical membrane-spanning segment. At 516 to 555 (PRKLLVTYCSSWKLIQCWGQQEFAIPDNVLGIVYGQTICW) the chain is on the extracellular side. A helical transmembrane segment spans residues 556–576 (IGAFFSPLLPAIATLKFIIIF). Residues 577-601 (YVKEWSLLYTCRPSPRPFRASNSNF) are Cytoplasmic-facing. The chain crosses the membrane as a helical span at residues 602–622 (FFLLVLLIGLCLAIIPLTISI). The Extracellular portion of the chain corresponds to 623–665 (SRIPSSKACGPFTNFNTTWEVIPKTVSTFPSSLQSFIHGVTSE). Asparagine 638 is a glycosylation site (N-linked (GlcNAc...) asparagine). A helical membrane pass occupies residues 666–686 (AFAVPFFMIICLIMFYFIALA). Over 687–723 (GAHKRVVIQLREQLSLESRDKRYLIQKLTEAQRDTRN) the chain is Cytoplasmic.

It belongs to the TMC family. As to quaternary structure, interacts with PIEZO2; the interaction inhibits PIEZO2-conducted mechanically activated currents.

It is found in the membrane. Its function is as follows. Acts as an inhibitory modulator of PIEZO2 mechanosensitive channel in dorsal root ganglion (DRG) neurons through physical interactions or interference with the interaction between Piezo2 and the cytoskeleton. The chain is Transmembrane channel-like protein 7 (TMC7) from Macaca fascicularis (Crab-eating macaque).